The following is a 260-amino-acid chain: Achaete-scute homolog 2 (260 aa).

Disordered stretches follow at residues 85–126 (AGAC…RNER) and 191–239 (PATR…EDSS). 2 stretches are compositionally biased toward low complexity: residues 110-121 (ATEASSSSAAVA) and 200-218 (TQPS…STSP). The bHLH domain occupies 118–170 (AAVARRNERERNRVKLVNLGFQALRQHVPHGGANKKLSKVETLRSAVEYIRAL).

Efficient DNA binding requires dimerization with another bHLH protein. Forms heterodimers with bHLH transcription factor TCF3. May not heterodimerise with bHLH protein HAND1. In terms of tissue distribution, expressed in Schwann cells in the peripheral nerve (at protein level). Also expressed by endothelial cells (at protein level). May be expressed in neuronal precursor cells.

Its subcellular location is the nucleus. The protein resides in the cytoplasm. Transcription factor. Binds to E-box motifs 5'-CANNTG-3' in the regulatory elements of target genes, probably as a heterodimer with another basic helix-loop-helix (bHLH) protein such as the transcription factor TCF3. May bind both open and closed chromatin, acting as a pioneer transcription factor to allow other factors to bind and activate lineage-specific genes. Required during post-implantation development for the generation of some differentiated trophoblast cell types. Transcriptional activity of ASCL2 may be antagonised in a subset of trophoblast cells by bHLH transcription factor HAND1, perhaps by competing for dimerization with other bHLH proteins. Involved in differentiation and function of follicular T-helper (Tfh) cells, thereby playing a role in germinal center responses; probably modulates expression of genes involved in Tfh cell function, such as BCL6. May also act as a suppressor of Th1-, Th2- and Th17-cell differentiation. Induces the formation of stem cells in intestinal crypts in vitro, synergistically activating transcription of target genes, such as SOX9, together with TCF4/beta-catenin. May form a bistable transcriptional switch, controlling expression of its own gene together with Wnt/R-spondin signaling, and thereby maintaining stem cell characteristics. Modulates expression of target genes, including perhaps down-regulating EGR1/Krox24 and chemokine CXCL10/Mob-1 and up-regulating CXCR4 and CDKN1C/p57kip2, in Schwann cells. May play a role in reducing proliferation of Schwann cells, perhaps acting via modulation of expression of CDKN1C. May be dispensable for blastocyst formation and later embryonic function. May be involved in the determination of neuronal precursors. This is Achaete-scute homolog 2 (Ascl2) from Rattus norvegicus (Rat).